The primary structure comprises 180 residues: ATP-dependent protease subunit HslV (180 aa).

T6 is an active-site residue. 3 residues coordinate Na(+): A164, C167, and T170.

Belongs to the peptidase T1B family. HslV subfamily. In terms of assembly, a double ring-shaped homohexamer of HslV is capped on each side by a ring-shaped HslU homohexamer. The assembly of the HslU/HslV complex is dependent on binding of ATP.

The protein localises to the cytoplasm. It carries out the reaction ATP-dependent cleavage of peptide bonds with broad specificity.. Allosterically activated by HslU binding. Its function is as follows. Protease subunit of a proteasome-like degradation complex believed to be a general protein degrading machinery. The protein is ATP-dependent protease subunit HslV of Borrelia hermsii (strain HS1 / DAH).